A 192-amino-acid polypeptide reads, in one-letter code: Large ribosomal subunit protein bL25 (192 aa).

This sequence belongs to the bacterial ribosomal protein bL25 family. CTC subfamily. Part of the 50S ribosomal subunit; part of the 5S rRNA/L5/L18/L25 subcomplex. Contacts the 5S rRNA. Binds to the 5S rRNA independently of L5 and L18.

Its function is as follows. This is one of the proteins that binds to the 5S RNA in the ribosome where it forms part of the central protuberance. In Marinomonas sp. (strain MWYL1), this protein is Large ribosomal subunit protein bL25.